The chain runs to 151 residues: Transcriptional repressor NrdR (151 aa).

A zinc finger spans residues 3-34; the sequence is CPYCGYIEDRVIDSRPTDEGSAIRRRRECSKC. The ATP-cone domain occupies 49–139; the sequence is IMVIKKDKSR…VYRQFKDINT (91 aa).

It belongs to the NrdR family. The cofactor is Zn(2+).

In terms of biological role, negatively regulates transcription of bacterial ribonucleotide reductase nrd genes and operons by binding to NrdR-boxes. This is Transcriptional repressor NrdR from Acetivibrio thermocellus (strain ATCC 27405 / DSM 1237 / JCM 9322 / NBRC 103400 / NCIMB 10682 / NRRL B-4536 / VPI 7372) (Clostridium thermocellum).